The chain runs to 143 residues: Peptide methionine sulfoxide reductase MsrB (143 aa).

One can recognise a MsrB domain in the interval 5 to 127; that stretch reads KEKRLKELNR…NSAALKFIPK (123 aa). Cys116 functions as the Nucleophile in the catalytic mechanism.

Belongs to the MsrB Met sulfoxide reductase family.

It catalyses the reaction L-methionyl-[protein] + [thioredoxin]-disulfide + H2O = L-methionyl-(R)-S-oxide-[protein] + [thioredoxin]-dithiol. This Bacillus pumilus (strain SAFR-032) protein is Peptide methionine sulfoxide reductase MsrB.